The sequence spans 349 residues: Protein-glutamate methylesterase/protein-glutamine glutaminase 2 (349 aa).

Residues 4-121 enclose the Response regulatory domain; sequence SVLVVDDSAL…AEGMQAYAEE (118 aa). Aspartate 55 carries the 4-aspartylphosphate modification. One can recognise a CheB-type methylesterase domain in the interval 151–343; the sequence is LLSTEKIIAL…AALLQQAARR (193 aa). Residues serine 163, histidine 189, and aspartate 285 contribute to the active site.

The protein belongs to the CheB family. As to quaternary structure, interacts with the C-terminal pentapeptide GWEEF of McpB. In terms of processing, phosphorylated by CheA. Phosphorylation of the N-terminal regulatory domain activates the methylesterase activity.

It localises to the cytoplasm. The catalysed reaction is [protein]-L-glutamate 5-O-methyl ester + H2O = L-glutamyl-[protein] + methanol + H(+). The enzyme catalyses L-glutaminyl-[protein] + H2O = L-glutamyl-[protein] + NH4(+). Functionally, involved in chemotaxis. Part of a chemotaxis signal transduction system that modulates chemotaxis in response to various stimuli. Catalyzes the demethylation of specific methylglutamate residues introduced into the chemoreceptors (methyl-accepting chemotaxis proteins or MCP) by CheR. Also mediates the irreversible deamidation of specific glutamine residues to glutamic acid. Acts on the methyl-accepting chemotaxis protein McpB. May be involved in a specific chemotactic response, which takes place during infection and is required for P.aeruginosa pathogenicity. The protein is Protein-glutamate methylesterase/protein-glutamine glutaminase 2 of Pseudomonas aeruginosa (strain ATCC 15692 / DSM 22644 / CIP 104116 / JCM 14847 / LMG 12228 / 1C / PRS 101 / PAO1).